Consider the following 210-residue polypeptide: Kalata-B2 (210 aa).

Positions 1–22 (MAKFTNCLVLSLLLAAFVGAFG) are cleaved as a signal peptide. A propeptide spanning residues 23-66 (AEFSEADKATLVNDIAENIQKEILGEVKTSETVLTMFLKEMQLK) is cleaved from the precursor. The segment at residues 67–95 (GLPVCGETCFGGTCNTPGCSCTWPICTRD) is a cross-link (cyclopeptide (Gly-Asp)). 3 disulfides stabilise this stretch: cysteine 71–cysteine 85, cysteine 75–cysteine 87, and cysteine 80–cysteine 92. Positions 96 to 120 (SLPMRAGGKTSETTLHMFLKEMQLK) are excised as a propeptide. A cross-link (cyclopeptide (Gly-Asp)) is located at residues 121-149 (GLPVCGETCFGGTCNTPGCSCTWPICTRD). Intrachain disulfides connect cysteine 125–cysteine 139, cysteine 129–cysteine 141, and cysteine 134–cysteine 146. The propeptide occupies 150-174 (SLPMSAGGKTSETTLHMFLKEMQLK). Residues 175–203 (GLPVCGETCFGGTCNTPGCSCTWPICTRD) constitute a cross-link (cyclopeptide (Gly-Asp)). 3 cysteine pairs are disulfide-bonded: cysteine 179/cysteine 193, cysteine 183/cysteine 195, and cysteine 188/cysteine 200. Positions 204 to 210 (SLPLVAA) are excised as a propeptide.

The protein belongs to the cyclotide family. Moebius subfamily. Post-translationally, kalata-B2 is a cyclic peptide which occurs in three forms: with unmodified Trp, with Trp oxidized to form N-formylkynurenine and with Trp oxidized to form kynurenine. Oxidation is enhanced by exposure to sunlight.

Functionally, probably participates in a plant defense mechanism. Inhibitory effect on the growth and development of larvae from Helicoverpa punctigera. Has hemolytic activity. The chain is Kalata-B2 (OAK4) from Oldenlandia affinis.